The primary structure comprises 122 residues: Lycotoxin-Pa4a (122 aa).

A signal peptide spans 1–20; sequence MKLGIFFSVFFLAMIHSCLS. The propeptide occupies 21–47; the sequence is ETNEDKNLESYFREDDLKALSFGEYAR. Disulfide bonds link Cys-58-Cys-73, Cys-65-Cys-82, Cys-72-Cys-100, and Cys-84-Cys-98.

The protein belongs to the neurotoxin 19 (CSTX) family. In terms of tissue distribution, expressed by the venom gland.

It localises to the secreted. The protein resides in the target cell membrane. Its function is as follows. Potent antibacterial peptide with anti-inflammatory properties. Inhibits both Gram-negative and Gram-positive bacteria by disrupting both the outer membrane and the cytosolic membrane of bacteria. Also downregulates the expression of pro-inflammatory mediators (cyclooxygenase-2 (PTGS2/COX2), nitric oxide-induced synthase (NOS2), IL-1 beta (IL1B), TNF-alpha (TNF)) and upregulates the level of anti-inflammatory cytokine (IL10) by inactivating mitogen-activated protein kinase signaling in a lipopolysaccharide-stimulated murine macrophage cell line. The protein is Lycotoxin-Pa4a of Pardosa astrigera (Wolf spider).